A 233-amino-acid polypeptide reads, in one-letter code: Translation initiation factor 6 (233 aa).

It belongs to the eIF-6 family.

In terms of biological role, binds to the 50S ribosomal subunit and prevents its association with the 30S ribosomal subunit to form the 70S initiation complex. In Aeropyrum pernix (strain ATCC 700893 / DSM 11879 / JCM 9820 / NBRC 100138 / K1), this protein is Translation initiation factor 6.